The following is a 248-amino-acid chain: 1-(5-phosphoribosyl)-5-[(5-phosphoribosylamino)methylideneamino] imidazole-4-carboxamide isomerase (248 aa).

Asp8 serves as the catalytic Proton acceptor. Residue Asp131 is the Proton donor of the active site.

This sequence belongs to the HisA/HisF family.

It is found in the cytoplasm. It catalyses the reaction 1-(5-phospho-beta-D-ribosyl)-5-[(5-phospho-beta-D-ribosylamino)methylideneamino]imidazole-4-carboxamide = 5-[(5-phospho-1-deoxy-D-ribulos-1-ylimino)methylamino]-1-(5-phospho-beta-D-ribosyl)imidazole-4-carboxamide. The protein operates within amino-acid biosynthesis; L-histidine biosynthesis; L-histidine from 5-phospho-alpha-D-ribose 1-diphosphate: step 4/9. The chain is 1-(5-phosphoribosyl)-5-[(5-phosphoribosylamino)methylideneamino] imidazole-4-carboxamide isomerase from Cupriavidus necator (strain ATCC 17699 / DSM 428 / KCTC 22496 / NCIMB 10442 / H16 / Stanier 337) (Ralstonia eutropha).